A 274-amino-acid chain; its full sequence is Large ribosomal subunit protein uL2 (274 aa).

Residues 223-274 (VAMNPVDHPHGGGEGRTSGGRHPVTPWGVPTKGYKTRSNKRTDKYIVRRRNK) are disordered.

It belongs to the universal ribosomal protein uL2 family. As to quaternary structure, part of the 50S ribosomal subunit. Forms a bridge to the 30S subunit in the 70S ribosome.

In terms of biological role, one of the primary rRNA binding proteins. Required for association of the 30S and 50S subunits to form the 70S ribosome, for tRNA binding and peptide bond formation. It has been suggested to have peptidyltransferase activity; this is somewhat controversial. Makes several contacts with the 16S rRNA in the 70S ribosome. This chain is Large ribosomal subunit protein uL2, found in Shewanella sp. (strain ANA-3).